The chain runs to 302 residues: Homoserine kinase (302 aa).

Residue 92-102 (PLARGLGSSAT) coordinates ATP.

The protein belongs to the GHMP kinase family. Homoserine kinase subfamily.

The protein resides in the cytoplasm. It carries out the reaction L-homoserine + ATP = O-phospho-L-homoserine + ADP + H(+). It participates in amino-acid biosynthesis; L-threonine biosynthesis; L-threonine from L-aspartate: step 4/5. Its function is as follows. Catalyzes the ATP-dependent phosphorylation of L-homoserine to L-homoserine phosphate. The sequence is that of Homoserine kinase from Trichormus variabilis (strain ATCC 29413 / PCC 7937) (Anabaena variabilis).